The primary structure comprises 447 residues: GTPase Der (447 aa).

EngA-type G domains lie at 3–167 (PVVA…NLPD) and 181–354 (IKLA…KSAT). Residues 9-16 (GRPNVGKS), 56-60 (DTGGF), 119-122 (NKAE), 187-194 (GRPNVGKS), 234-238 (DTAGL), and 299-302 (NKWD) each bind GTP. One can recognise a KH-like domain in the interval 355-439 (RKMSTPVLTR…PLRIQFKSSQ (85 aa)).

It belongs to the TRAFAC class TrmE-Era-EngA-EngB-Septin-like GTPase superfamily. EngA (Der) GTPase family. As to quaternary structure, associates with the 50S ribosomal subunit.

In terms of biological role, GTPase that plays an essential role in the late steps of ribosome biogenesis. In Variovorax paradoxus (strain S110), this protein is GTPase Der.